The sequence spans 481 residues: 1-acylglycerol-3-phosphate O-acyltransferase PNPLA3 (481 aa).

Topologically, residues 1–41 are cytoplasmic; that stretch reads MYDAERGWSLSFAGCGFLGFYHVGATRCLSEHAPHLLRDAR. In terms of domain architecture, PNPLA spans 10-179; that stretch reads LSFAGCGFLG…SDNVPFIDAK (170 aa). Residues 14–19 carry the GXGXXG motif; that stretch reads GCGFLG. The chain crosses the membrane as a helical; Signal-anchor for type II membrane protein span at residues 42–62; that stretch reads MLFGASAGALHCVGVLSGIPL. The GXSXG motif lies at 45 to 49; the sequence is GASAG. Ser47 (nucleophile) is an active-site residue. Residues 63 to 481 are Lumenal-facing; sequence EQTLQVLSDL…FPSFSLEKSL (419 aa). A glycan (N-linked (GlcNAc...) asparagine) is linked at Asn89. The Proton acceptor role is filled by Asp166. Positions 166 to 168 match the DGA/G motif; the sequence is DGG. Asn280 carries an N-linked (GlcNAc...) asparagine glycan.

The protein localises to the membrane. It is found in the lipid droplet. It carries out the reaction a 1-acyl-sn-glycero-3-phosphate + an acyl-CoA = a 1,2-diacyl-sn-glycero-3-phosphate + CoA. The catalysed reaction is a triacylglycerol + H2O = a diacylglycerol + a fatty acid + H(+). It catalyses the reaction a 1-acylglycerol + a 1,3-diacylglycerol = a triacylglycerol + glycerol. The enzyme catalyses a 1-acylglycerol + a 1,2-diacylglycerol = a triacylglycerol + glycerol. It carries out the reaction 2 a 1-acylglycerol = a 1,2-diacylglycerol + glycerol. The catalysed reaction is 1-(9Z-octadecenoyl)-sn-glycero-3-phosphate + (9Z)-octadecenoyl-CoA = 1,2-di-(9Z-octadecenoyl)-sn-glycero-3-phosphate + CoA. It catalyses the reaction 1-(9Z-octadecenoyl)-sn-glycero-3-phosphate + hexadecanoyl-CoA = 1-(9Z)-octadecenoyl-2-hexadecanoyl-sn-glycero-3-phosphate + CoA. The enzyme catalyses 1-(9Z-octadecenoyl)-sn-glycero-3-phosphate + (9Z,12Z)-octadecadienoyl-CoA = 1-(9Z)-octadecenoyl-2-(9Z,12Z)-octadecadienoyl-sn-glycero-3-phosphate + CoA. It carries out the reaction 1-(9Z-octadecenoyl)-sn-glycero-3-phosphate + (5Z,8Z,11Z,14Z)-eicosatetraenoyl-CoA = 1-(9Z)-octadecenoyl-2-(5Z,8Z,11Z,14Z)-eicosatetraenoyl-sn-glycero-3-phosphate + CoA. The catalysed reaction is 2 1-(9Z-octadecenoyl)-glycerol = 1,2-di-(9Z-octadecenoyl)-glycerol + glycerol. It catalyses the reaction 1-(9Z-octadecenoyl)-glycerol + 1,2-di-(9Z-octadecenoyl)-glycerol = 1,2,3-tri-(9Z-octadecenoyl)-glycerol + glycerol. The enzyme catalyses 1-(9Z-octadecenoyl)-glycerol + 1,3-di-(9Z-octadecenoyl)-glycerol = 1,2,3-tri-(9Z-octadecenoyl)-glycerol + glycerol. It carries out the reaction 1,2,3-tri-(9Z-octadecenoyl)-glycerol + H2O = 1,3-di-(9Z-octadecenoyl)-glycerol + (9Z)-octadecenoate + H(+). The catalysed reaction is a 1,2-diacyl-sn-glycero-3-phosphocholine + H2O = a 1-acyl-sn-glycero-3-phosphocholine + a fatty acid + H(+). It participates in phospholipid metabolism. Its pathway is glycerolipid metabolism. The triglyceride lipase activity is inhibited by BEL ((E)-6-(bromomethylene)-3-(1-naphthalenyl)-2H-tetrahydropyran-2-one), a suicide substrate inhibitor. In terms of biological role, specifically catalyzes coenzyme A (CoA)-dependent acylation of 1-acyl-sn-glycerol 3-phosphate (2-lysophosphatidic acid/LPA) to generate phosphatidic acid (PA), an important metabolic intermediate and precursor for both triglycerides and glycerophospholipids. Does not esterify other lysophospholipids. Acyl donors are long chain (at least C16) fatty acyl-CoAs: arachidonoyl-CoA, linoleoyl-CoA, oleoyl-CoA and at a lesser extent palmitoyl-CoA. Additionally possesses low triacylglycerol lipase and CoA-independent acylglycerol transacylase activities and thus may play a role in acyl-chain remodeling of triglycerides. In vitro may express hydrolytic activity against glycerolipids triacylglycerol, diacylglycerol and monoacylglycerol, with a strong preference for oleic acid as the acyl moiety. However, the triacylglycerol hydrolase activity is controversial and may be very low. Possesses phospholipase A2 activity. In Homo sapiens (Human), this protein is 1-acylglycerol-3-phosphate O-acyltransferase PNPLA3.